Reading from the N-terminus, the 342-residue chain is Heat-inducible transcription repressor HrcA (342 aa).

It belongs to the HrcA family.

Negative regulator of class I heat shock genes (grpE-dnaK-dnaJ and groELS operons). Prevents heat-shock induction of these operons. The protein is Heat-inducible transcription repressor HrcA of Oceanobacillus iheyensis (strain DSM 14371 / CIP 107618 / JCM 11309 / KCTC 3954 / HTE831).